The following is a 570-amino-acid chain: Phosphoglucomutase 1 (570 aa).

Ser2 carries the post-translational modification N-acetylserine. Alpha-D-glucose 1,6-bisphosphate contacts are provided by Arg24 and Ser120. The active-site Phosphoserine intermediate is Ser120. Mg(2+) is bound by residues Ser120, Asp291, Asp293, and Asp295. Ser120 is modified (phosphoserine). Residues Asp295, Arg296, Thr360, Glu379, Ser381, and Lys392 each contribute to the alpha-D-glucose 1,6-bisphosphate site.

Belongs to the phosphohexose mutase family. In terms of assembly, monomer. Mg(2+) is required as a cofactor.

It is found in the cytoplasm. The enzyme catalyses alpha-D-glucose 1-phosphate = alpha-D-glucose 6-phosphate. It carries out the reaction O-phospho-L-seryl-[protein] + alpha-D-glucose 1-phosphate = alpha-D-glucose 1,6-bisphosphate + L-seryl-[protein]. It catalyses the reaction alpha-D-glucose 1,6-bisphosphate + L-seryl-[protein] = O-phospho-L-seryl-[protein] + alpha-D-glucose 6-phosphate. In terms of biological role, minor phosphoglucomutase isozyme that catalyzes the reversible interconversion of alpha-D-glucose 1-phosphate and alpha-D-glucose 6-phosphate. The mechanism proceeds via the intermediate compound alpha-D-glucose 1,6-bisphosphate. Constitutes about 10-20% of the phosphoglucomutase activity in the cell. Key enzyme in hexose metabolism. The forward reaction is an essential step in the energy metabolism of galactose since the product of the galactose pathway enzymes in yeast is glucose 1-phosphate. The reverse reaction is an essential step for biosynthesis when carbon sources other than galactose are the energy source because glucose 1-phosphate is the starting point for the synthesis of UDP-glucose, which acts as a precursor for the synthesis of oligosaccharides and trehalose. This chain is Phosphoglucomutase 1, found in Saccharomyces cerevisiae (strain ATCC 204508 / S288c) (Baker's yeast).